The primary structure comprises 74 residues: Large ribosomal subunit protein eL38B (74 aa).

The protein belongs to the eukaryotic ribosomal protein eL38 family. Component of the large ribosomal subunit (LSU). Mature yeast ribosomes consist of a small (40S) and a large (60S) subunit. The 40S small subunit contains 1 molecule of ribosomal RNA (18S rRNA) and at least 33 different proteins. The large 60S subunit contains 3 rRNA molecules (25S, 5.8S and 5S rRNA) and at least 46 different proteins.

The protein localises to the cytoplasm. Its function is as follows. Component of the ribosome, a large ribonucleoprotein complex responsible for the synthesis of proteins in the cell. The small ribosomal subunit (SSU) binds messenger RNAs (mRNAs) and translates the encoded message by selecting cognate aminoacyl-transfer RNA (tRNA) molecules. The large subunit (LSU) contains the ribosomal catalytic site termed the peptidyl transferase center (PTC), which catalyzes the formation of peptide bonds, thereby polymerizing the amino acids delivered by tRNAs into a polypeptide chain. The nascent polypeptides leave the ribosome through a tunnel in the LSU and interact with protein factors that function in enzymatic processing, targeting, and the membrane insertion of nascent chains at the exit of the ribosomal tunnel. The sequence is that of Large ribosomal subunit protein eL38B (rpl3802) from Schizosaccharomyces pombe (strain 972 / ATCC 24843) (Fission yeast).